A 305-amino-acid chain; its full sequence is UDP-3-O-acyl-N-acetylglucosamine deacetylase (305 aa).

His79, His238, and Asp242 together coordinate Zn(2+). The active-site Proton donor is the His265.

Belongs to the LpxC family. Zn(2+) is required as a cofactor.

It catalyses the reaction a UDP-3-O-[(3R)-3-hydroxyacyl]-N-acetyl-alpha-D-glucosamine + H2O = a UDP-3-O-[(3R)-3-hydroxyacyl]-alpha-D-glucosamine + acetate. The protein operates within glycolipid biosynthesis; lipid IV(A) biosynthesis; lipid IV(A) from (3R)-3-hydroxytetradecanoyl-[acyl-carrier-protein] and UDP-N-acetyl-alpha-D-glucosamine: step 2/6. Catalyzes the hydrolysis of UDP-3-O-myristoyl-N-acetylglucosamine to form UDP-3-O-myristoylglucosamine and acetate, the committed step in lipid A biosynthesis. The chain is UDP-3-O-acyl-N-acetylglucosamine deacetylase from Histophilus somni (strain 129Pt) (Haemophilus somnus).